The primary structure comprises 893 residues: DNA gyrase subunit A (893 aa).

The region spanning 35–501 (LPDVRDGLKP…GLEDLEDEDL (467 aa)) is the Topo IIA-type catalytic domain. Y123 functions as the O-(5'-phospho-DNA)-tyrosine intermediate in the catalytic mechanism. A GyrA-box motif is present at residues 528-534 (QNRGGRG). The interval 810–893 (VNEEDDNEEN…ASDNEEDSDE (84 aa)) is disordered. 2 stretches are compositionally biased toward acidic residues: residues 812 to 821 (EEDDNEENAD) and 852 to 862 (DAEMESVESPE). Basic and acidic residues predominate over residues 863–879 (NDDRIDIRQDFMDRVNE). The span at 880-893 (DIESASDNEEDSDE) shows a compositional bias: acidic residues.

Belongs to the type II topoisomerase GyrA/ParC subunit family. As to quaternary structure, heterotetramer, composed of two GyrA and two GyrB chains. In the heterotetramer, GyrA contains the active site tyrosine that forms a transient covalent intermediate with DNA, while GyrB binds cofactors and catalyzes ATP hydrolysis.

The protein localises to the cytoplasm. It catalyses the reaction ATP-dependent breakage, passage and rejoining of double-stranded DNA.. Functionally, a type II topoisomerase that negatively supercoils closed circular double-stranded (ds) DNA in an ATP-dependent manner to modulate DNA topology and maintain chromosomes in an underwound state. Negative supercoiling favors strand separation, and DNA replication, transcription, recombination and repair, all of which involve strand separation. Also able to catalyze the interconversion of other topological isomers of dsDNA rings, including catenanes and knotted rings. Type II topoisomerases break and join 2 DNA strands simultaneously in an ATP-dependent manner. This chain is DNA gyrase subunit A, found in Staphylococcus epidermidis (strain ATCC 12228 / FDA PCI 1200).